Here is a 200-residue protein sequence, read N- to C-terminus: NADH-quinone oxidoreductase chain 10 (200 aa).

5 consecutive transmembrane segments (helical) span residues 2-22, 26-46, 51-71, 90-110, and 144-164; these read MTFA…MVVI, PVHS…LFVL, FVAM…FLFV, LPLA…AFSG, and VLMF…AIVL.

The protein belongs to the complex I subunit 6 family. NDH-1 is composed of at least 14 different subunits, Nqo1 to Nqo14. The complex has a L-shaped structure, with the hydrophobic arm (subunits Nqo7, Nqo8, Nqo10 to Nqo14) embedded in the inner membrane and the hydrophilic peripheral arm (subunits Nqo1 to Nqo6, Nqo9) protruding into the bacterial cytoplasm. The hydrophilic domain contains all the redox centers.

Its subcellular location is the cell inner membrane. It catalyses the reaction a quinone + NADH + 5 H(+)(in) = a quinol + NAD(+) + 4 H(+)(out). Functionally, NDH-1 shuttles electrons from NADH, via FMN and iron-sulfur (Fe-S) centers, to quinones in the respiratory chain. The immediate electron acceptor for the enzyme in this species is believed to be ubiquinone. Couples the redox reaction to proton translocation (for every two electrons transferred, four hydrogen ions are translocated across the cytoplasmic membrane), and thus conserves the redox energy in a proton gradient. The chain is NADH-quinone oxidoreductase chain 10 from Paracoccus denitrificans.